Here is a 141-residue protein sequence, read N- to C-terminus: Galactose-6-phosphate isomerase subunit LacA (141 aa).

It belongs to the LacAB/RpiB family. As to quaternary structure, heteromultimeric protein consisting of LacA and LacB.

The enzyme catalyses aldehydo-D-galactose 6-phosphate = keto-D-tagatose 6-phosphate. Its pathway is carbohydrate metabolism; D-galactose 6-phosphate degradation; D-tagatose 6-phosphate from D-galactose 6-phosphate: step 1/1. The polypeptide is Galactose-6-phosphate isomerase subunit LacA (Streptococcus agalactiae serotype Ia (strain ATCC 27591 / A909 / CDC SS700)).